We begin with the raw amino-acid sequence, 324 residues long: Cyclic GMP-AMP synthase CdnE03 (324 aa).

The Mg(2+) site is built by Asp87 and Asp89. ATP is bound by residues Asp89, 144–145 (NK), and Asp159. Asp159 provides a ligand contact to Mg(2+). GTP-binding residues include Lys224 and Ser243.

The protein belongs to the CD-NTase family. E03 subfamily. The cofactor is Mg(2+).

The enzyme catalyses GTP + ATP = 3',2'-cGAMP + 2 diphosphate. With respect to regulation, activated by a virus-derived, approximately 400 nucleotide RNA (called CBASS-activating bacteriophage RNA, cabRNA) that begins in the viral terminase subunit terS and extends into terL. RNA secondary and/or tertiary structure, as well as viral infection itself, are important for CdnE activation. A much longer RNA (escaper RNA) with a different secondary structure, derived from a terS-mutated virus still binds to this protein, but does not activate its nucleotide cyclase activity. Shorter viral-derived RNAs (34 and 49 nt) with extensive predicted secondary structure also activate the enzyme, although not as well as full-length cabRNA. Its function is as follows. Cyclic nucleotide synthase (second messenger synthase) of a CBASS antivirus system. CBASS (cyclic oligonucleotide-based antiphage signaling system) provides immunity against bacteriophage. The CD-NTase protein synthesizes cyclic nucleotides in response to infection; these serve as specific second messenger signals. The signals activate a diverse range of effectors, leading to bacterial cell death and thus abortive phage infection. The effector for this system is downstream Cap15. A type I-B CBASS system. Functionally, cyclic dinucleotide synthase that catalyzes the synthesis of 3',2'-cyclic GMP-AMP (cGAMP) from GTP and ATP upon activation by viral-derived cabRNA. Binds cabRNA via positive charges in its N-terminus. Protects S.aureus against phage infection. When the CBASS operon (cdnE-cap15) is introduced in S.aureus strain RN4220 there is strong protection against lytic DNA phages 80alpha-vir and phi-NM1-gamma-6 but little to no protection against phages phi-NM4-gamma-4 or phi-12-gamma-3. This chain is Cyclic GMP-AMP synthase CdnE03, found in Staphylococcus schleiferi.